The primary structure comprises 233 residues: Phytol kinase (233 aa).

6 helical membrane-spanning segments follow: residues 9-29, 56-76, 96-118, 122-144, 172-192, and 213-233; these read MALP…AVVL, VVLI…AGVF, VGRH…GGFF, LPIF…ALVG, FLVT…VLVV, and NLTV…LWLG.

It belongs to the polyprenol kinase family.

The protein localises to the cell membrane. It carries out the reaction phytol + CTP = phytyl phosphate + CDP + H(+). It functions in the pathway cofactor biosynthesis; tocopherol biosynthesis. Catalyzes the CTP-dependent phosphorylation of phytol to phytylmonophosphate (PMP). Can also use UTP as an alternative phosphate donor, but not ATP or GTP. Is involved in tocopherol biosynthesis, via the utilization of phytol generated by chlorophyll degradation. Also plays a significant but not critical role in the recycling of phytol for the biosynthesis of new chlorophyll molecules. The protein is Phytol kinase of Synechocystis sp. (strain ATCC 27184 / PCC 6803 / Kazusa).